The following is a 147-amino-acid chain: AP-2 complex subunit sigma (147 aa).

The protein belongs to the adaptor complexes small subunit family. In terms of assembly, adaptor protein complex 2 (AP-2) is a heterotetramer composed of two large adaptins (alpha-type subunit APL3 and beta-type subunit APL1), a medium chain (mu-type subunit APM4) and a small adaptin (sigma-type subunit APS2). Interacts with APL1.

The protein localises to the cell membrane. The protein resides in the membrane. It localises to the coated pit. Its function is as follows. Component of the adaptor complexes which link clathrin to receptors in coated vesicles. Clathrin-associated protein complexes are believed to interact with the cytoplasmic tails of membrane proteins, leading to their selection and concentration. The chain is AP-2 complex subunit sigma (APS2) from Saccharomyces cerevisiae (strain ATCC 204508 / S288c) (Baker's yeast).